A 1226-amino-acid chain; its full sequence is Double-stranded RNA-specific adenosine deaminase (1226 aa).

Residue Arg26 is modified to Asymmetric dimethylarginine. In terms of domain architecture, Z-binding 1 spans 133-199; that stretch reads LSIYQDQEQR…GTPPLWKIAV (67 aa). The interaction with Z-DNA stretch occupies residues 133 to 202; that stretch reads LSIYQDQEQR…PLWKIAVSTQ (70 aa). Disordered regions lie at residues 208–238 and 258–286; these read SGVVRPDGHSQGAPNSDPSLEPEDRNSTSVS and GVVRPDSHSQGSPNSDPGLEPEDSNSTSA. Ser285 is subject to Phosphoserine. The region spanning 293–357 is the Z-binding 2 domain; the sequence is FLDMAEIKEK…TTPPIWHLTD (65 aa). Glycyl lysine isopeptide (Lys-Gly) (interchain with G-Cter in SUMO2) cross-links involve residues Lys384 and Lys408. Lys418 participates in a covalent cross-link: Glycyl lysine isopeptide (Lys-Gly) (interchain with G-Cter in SUMO); alternate. Residue Lys418 forms a Glycyl lysine isopeptide (Lys-Gly) (interchain with G-Cter in SUMO1); alternate linkage. A Glycyl lysine isopeptide (Lys-Gly) (interchain with G-Cter in SUMO2); alternate cross-link involves residue Lys418. Ser481 carries the post-translational modification Phosphoserine. The 69-residue stretch at 503-571 folds into the DRBM 1 domain; the sequence is NPISGLLEYA…AMKAMTILLE (69 aa). Residues 574–597 show a composition bias toward basic and acidic residues; the sequence is KAKDSGKSEESSHYSTEKESEKTA. The disordered stretch occupies residues 574–610; it reads KAKDSGKSEESSHYSTEKESEKTAESQTPTPSATSFF. A Glycyl lysine isopeptide (Lys-Gly) (interchain with G-Cter in SUMO2) cross-link involves residue Lys580. The span at 600 to 610 shows a compositional bias: polar residues; it reads QTPTPSATSFF. 2 positions are modified to phosphothreonine: Thr601 and Thr603. Phosphoserine is present on residues Ser614, Ser629, and Ser636. A DRBM 2 domain is found at 614–682; it reads SPVTTLLECM…AEEAMKALHG (69 aa). Residues 716–725 are N-terminal extension of DRBM 3 and constituent of a bi-partite nuclear localization signal; it reads IGELVRYLNT. The region spanning 726–794 is the DRBM 3 domain; it reads NPVGGLLEYA…ADAALRVLIG (69 aa). The tract at residues 795–801 is C-terminal extension of DRBM 3 and constituent of a bi-partite nuclear localization signal; the sequence is ENEKAER. The residue at position 808 (Thr808) is a Phosphothreonine. Phosphoserine is present on residues Ser814, Ser823, and Ser825. A Glycyl lysine isopeptide (Lys-Gly) (interchain with G-Cter in SUMO2) cross-link involves residue Lys875. Positions 886–1221 constitute an A to I editase domain; sequence SLGTGNRCVK…ISKPQEEKNF (336 aa). His910 contributes to the Zn(2+) binding site. The active-site Proton donor is Glu912. Zn(2+)-binding residues include Cys966 and Cys1036.

In terms of assembly, homodimer. Homodimerization is essential for its catalytic activity. Isoform 5 can form heterodimers with ADARB1/ADAR2. Isoform 1 interacts with ILF2/NF45 and ILF3/NF90. Binding to ILF3/NF90 up-regulates ILF3-mediated gene expression. Isoform 1 and isoform 5 (via DRBM 3 domain) interact with TNPO1. Isoform 5 (via DRBM domains) interacts with XPO5. Isoform 1 and isoform 5 can interact with EIF2AK2/PKR and UPF1. Post-translationally, sumoylation reduces RNA-editing activity. As to expression, ubiquitously expressed, highest levels were found in brain and lung. Isoform 5 is expressed at higher levels in astrocytomas as compared to normal brain tissue and expression increases strikingly with the severity of the tumor, being higher in the most aggressive tumors.

It localises to the cytoplasm. The protein localises to the nucleus. Its subcellular location is the nucleolus. The catalysed reaction is adenosine in double-stranded RNA + H2O + H(+) = inosine in double-stranded RNA + NH4(+). Functionally, catalyzes the hydrolytic deamination of adenosine to inosine in double-stranded RNA (dsRNA) referred to as A-to-I RNA editing. This may affect gene expression and function in a number of ways that include mRNA translation by changing codons and hence the amino acid sequence of proteins since the translational machinery read the inosine as a guanosine; pre-mRNA splicing by altering splice site recognition sequences; RNA stability by changing sequences involved in nuclease recognition; genetic stability in the case of RNA virus genomes by changing sequences during viral RNA replication; and RNA structure-dependent activities such as microRNA production or targeting or protein-RNA interactions. Can edit both viral and cellular RNAs and can edit RNAs at multiple sites (hyper-editing) or at specific sites (site-specific editing). Its cellular RNA substrates include: bladder cancer-associated protein (BLCAP), neurotransmitter receptors for glutamate (GRIA2) and serotonin (HTR2C) and GABA receptor (GABRA3). Site-specific RNA editing of transcripts encoding these proteins results in amino acid substitutions which consequently alters their functional activities. Exhibits low-level editing at the GRIA2 Q/R site, but edits efficiently at the R/G site and HOTSPOT1. Its viral RNA substrates include: hepatitis C virus (HCV), vesicular stomatitis virus (VSV), measles virus (MV), hepatitis delta virus (HDV), and human immunodeficiency virus type 1 (HIV-1). Exhibits either a proviral (HDV, MV, VSV and HIV-1) or an antiviral effect (HCV) and this can be editing-dependent (HDV and HCV), editing-independent (VSV and MV) or both (HIV-1). Impairs HCV replication via RNA editing at multiple sites. Enhances the replication of MV, VSV and HIV-1 through an editing-independent mechanism via suppression of EIF2AK2/PKR activation and function. Stimulates both the release and infectivity of HIV-1 viral particles by an editing-dependent mechanism where it associates with viral RNAs and edits adenosines in the 5'UTR and the Rev and Tat coding sequence. Can enhance viral replication of HDV via A-to-I editing at a site designated as amber/W, thereby changing an UAG amber stop codon to an UIG tryptophan (W) codon that permits synthesis of the large delta antigen (L-HDAg) which has a key role in the assembly of viral particles. However, high levels of ADAR1 inhibit HDV replication. The sequence is that of Double-stranded RNA-specific adenosine deaminase (ADAR) from Homo sapiens (Human).